A 915-amino-acid polypeptide reads, in one-letter code: WD repeat-containing protein 44 (915 aa).

Over residues 1 to 14 (MASESDTEEFYDAP) the composition is skewed to acidic residues. The disordered stretch occupies residues 1–24 (MASESDTEEFYDAPEDVHLGTGYP). The residue at position 2 (Ala2) is an N-acetylalanine. Residues 2 to 173 (ASESDTEEFY…SSGEQLDASG (172 aa)) are binding activity. A Phosphoserine modification is found at Ser3. Positions 9–15 (EFYDAPE) match the FFAT-like motif motif. Tyr11 carries the post-translational modification Phosphotyrosine. Residues Ser27, Ser50, Ser66, Ser71, Ser81, and Ser126 each carry the phosphoserine modification. Disordered stretches follow at residues 79-102 (DDSL…VAGT), 117-174 (LQQD…ASGL), and 208-282 (VEEV…PKEN). The stretch at 114 to 139 (EHELQQDSEKAESQNVAEESELETQK) forms a coiled coil. A compositionally biased stretch (basic and acidic residues) spans 146-155 (TCEKSEKTVD). Thr161 and Thr221 each carry phosphothreonine. Residues 213–259 (PAKPPRHLTPEPDIVASTKKPVPARPPPPTNFPPPRPPPPSRPAPPP) form an important for interaction with ARHGAP26 AND ARHGAP10 region. Pro residues predominate over residues 235-258 (PARPPPPTNFPPPRPPPPSRPAPP). Ser264 bears the Phosphoserine mark. The segment covering 264–280 (SELEFEALKTPDLDVPK) has biased composition (basic and acidic residues). Thr273 is modified (phosphothreonine). The interval 336–349 (VMGPQRPRSNSGRE) is important for interaction with RAB11A. 2 positions are modified to phosphoserine: Ser344 and Ser346. Thr351 and Thr403 each carry phosphothreonine. Disordered stretches follow at residues 399–425 (SNDA…RLKQ) and 461–481 (DEVF…GMPY). Residues Ser405, Ser472, Ser473, and Ser474 each carry the phosphoserine modification. A compositionally biased stretch (acidic residues) spans 469–478 (DDPSSSDDEG). Phosphotyrosine is present on Tyr481. Residues 511-550 (EHMGAVWTMKFSHCGRLLASAGQDNIVRIWALKNAFDYFN) form a WD 1 repeat. Positions 559-593 (EGRVSPSPSQESLSSSKSDTDMGVCSGTDEDPDDK) are disordered. 2 positions are modified to phosphoserine: Ser563 and Ser567. Over residues 563 to 575 (SPSPSQESLSSSK) the composition is skewed to low complexity. WD repeat units follow at residues 607 to 645 (GHTA…CLCC), 647 to 687 (QHID…VALW), 692 to 731 (GQTK…YHTQ), 742 to 781 (KVGR…LSMK), 786 to 825 (VNSS…SKFT), 840 to 880 (AHNA…EVLD), and 882 to 915 (TSTG…KTVS).

In terms of assembly, interacts with the GTP-bound form of RAB11 when membrane-associated. Interacts with GRAF1/ARHGAP26 or GRAF2/ARHGAP10; the interaction connects the endoplasmic reticulum (ER) with the endosomal tubule. Interacts (via FFAT-like motif) with VAPA (via MSP domain) or VAPB (via MSP domain); the interaction connects the ER with the endosomal tubule. Does not bind to other Rab and Rho small G proteins. In terms of processing, phosphorylated by ATK1; the phosphorylation stabilizes its interaction with RAB11A and RAB11B.

The protein localises to the cytoplasm. The protein resides in the cytosol. It is found in the perinuclear region. Its subcellular location is the endosome membrane. It localises to the golgi apparatus. The protein localises to the trans-Golgi network. Functionally, downstream effector for Rab11 which regulates Rab11 intracellular membrane trafficking functions such as endocytic recycling, intracellular ciliogenesis and protein export. ATK1-mediated phosphorylation of WDR44 induces binding to Rab11 which activates endocytic recycling of transferrin receptor back to the plasma membrane. When bound to Rab11, prevents the formation of the ciliogenic Rab11-Rabin8/RAB3IP-RAB11FIP3 complex, therefore inhibiting preciliary trafficking and ciliogenesis. Participates in neo-synthesized protein export by connecting the endoplasmic reticulum (ER) with the endosomal tubule via direct interactions with the integral ER proteins VAPA or VAPB and the endosomal protein GRAFs (GRAF1/ARHGAP26 or GRAF2/ARHGAP10), which facilitates the transfer of proteins such as E-cadherin, MPP14 and CFTR into a Rab8-Rab10-Rab11-dependent export route. The polypeptide is WD repeat-containing protein 44 (Mus musculus (Mouse)).